Here is a 275-residue protein sequence, read N- to C-terminus: Formamidopyrimidine-DNA glycosylase (275 aa).

Proline 2 acts as the Schiff-base intermediate with DNA in catalysis. Glutamate 3 functions as the Proton donor in the catalytic mechanism. The Proton donor; for beta-elimination activity role is filled by lysine 58. DNA contacts are provided by histidine 93, arginine 111, and arginine 156. The segment at 241 to 275 adopts an FPG-type zinc-finger fold; the sequence is FAYDRAGLPCRVCGTPIRQIVQGQRSTYFCPTCQR. Arginine 265 functions as the Proton donor; for delta-elimination activity in the catalytic mechanism.

Belongs to the FPG family. In terms of assembly, monomer. Requires Zn(2+) as cofactor.

The catalysed reaction is Hydrolysis of DNA containing ring-opened 7-methylguanine residues, releasing 2,6-diamino-4-hydroxy-5-(N-methyl)formamidopyrimidine.. It carries out the reaction 2'-deoxyribonucleotide-(2'-deoxyribose 5'-phosphate)-2'-deoxyribonucleotide-DNA = a 3'-end 2'-deoxyribonucleotide-(2,3-dehydro-2,3-deoxyribose 5'-phosphate)-DNA + a 5'-end 5'-phospho-2'-deoxyribonucleoside-DNA + H(+). Its function is as follows. Involved in base excision repair of DNA damaged by oxidation or by mutagenic agents. Acts as a DNA glycosylase that recognizes and removes damaged bases. Has a preference for oxidized purines, such as 7,8-dihydro-8-oxoguanine (8-oxoG). Has AP (apurinic/apyrimidinic) lyase activity and introduces nicks in the DNA strand. Cleaves the DNA backbone by beta-delta elimination to generate a single-strand break at the site of the removed base with both 3'- and 5'-phosphates. This chain is Formamidopyrimidine-DNA glycosylase, found in Burkholderia vietnamiensis (strain G4 / LMG 22486) (Burkholderia cepacia (strain R1808)).